The chain runs to 204 residues: Inactive ribonuclease-like protein 9 (204 aa).

The N-terminal stretch at Met-1–Phe-26 is a signal peptide. Intrachain disulfides connect Cys-97/Cys-152, Cys-115/Cys-167, and Cys-122/Cys-129. 2 N-linked (GlcNAc...) asparagine glycosylation sites follow: Asn-130 and Asn-142.

This sequence belongs to the pancreatic ribonuclease family.

It is found in the secreted. Functionally, does not exhibit any ribonuclease activity. The protein is Inactive ribonuclease-like protein 9 (RNASE9) of Macaca nemestrina (Pig-tailed macaque).